Reading from the N-terminus, the 273-residue chain is Thioredoxin-like 1-3, chloroplastic (273 aa).

Residues 1–44 (MATDSFIKLNPISFNRARFDLRDFAGISPKSISSLCCISPRLIS) constitute a chloroplast transit peptide. Residues 62-202 (LFSKKKIPAF…FKEALEKHGR (141 aa)) enclose the Thioredoxin domain. Catalysis depends on nucleophile residues cysteine 125 and cysteine 128. Cysteine 125 and cysteine 128 are disulfide-bonded.

The protein belongs to the thioredoxin family.

The protein resides in the plastid. The protein localises to the chloroplast. Probable thiol-disulfide oxidoreductase that may participate in various redox reactions. In Arabidopsis thaliana (Mouse-ear cress), this protein is Thioredoxin-like 1-3, chloroplastic.